The primary structure comprises 715 residues: Coiled-coil domain-containing protein 13 (715 aa).

2 coiled-coil regions span residues 16–105 (KAMQ…KERD) and 134–458 (ATKI…NVHY). The interval 20-65 (EMQHKRLQKQMEKKREKELSLKSRADDQEEPLEVSDGLSLLHAGEP) is disordered. Positions 28 to 45 (KQMEKKREKELSLKSRAD) are enriched in basic and acidic residues. Phosphoserine is present on residues Ser-258, Ser-469, and Ser-536. 2 disordered regions span residues 482–541 (EDPG…EQKG) and 607–645 (LEPG…DPSF). Positions 554–608 (QAAEVERDRLTEFVTVLQKRVEESNSKLLESERKLQEERHRTVVLEQHLEKIRLE) form a coiled coil. Polar residues predominate over residues 625 to 637 (GLPTSNNRHNPTG). A coiled-coil region spans residues 653–683 (VESQMEELTTRLAIQVEENEMLKAALGSALR).

As to quaternary structure, interacts with PCM1, CEP290 and PCNT.

It is found in the cytoplasm. It localises to the cytoskeleton. The protein localises to the microtubule organizing center. The protein resides in the centrosome. Its subcellular location is the centriolar satellite. It is found in the cilium basal body. In terms of biological role, required for primary cilia formation and promotes the localization of the ciliopathy protein BBS4 to both centriolar satellites and cilia. The protein is Coiled-coil domain-containing protein 13 of Homo sapiens (Human).